The chain runs to 433 residues: MDRKTRLSEPPTLALRLKPYKTAIQQLRSVIRALKENTTVTFLPTPSLILQTVRSHCVSKITFNSSCLYITDKSFQPKTINNSTPLLGNFMYLTSSKDLTKFYVQDISDLSAKISMCAPDFNMEFSSACVHGQDIVRESENSAVHVDLDFGVVADLLKWIGPHTRVKRNVKKAPCPTGTVQILVHAGPPAIKFILTNGSELEFTANNRVSFHGVKNMRINVQLKNFYQTLLNCAVTKLPCTLRIVTEHDTLLYVASRNGLFAVENFLTEEPFQRGDPFDKNYVGNSGKSRGGGGGSGSLSSLANAGGLHDDGPGLDNDIMNEPMGLGGLGGGGGGGGKKHDRGGGGGSGTRKMSSGGGGGDHDHGLSSKEKYEQHKITSYLTSKGGSGGGGGGGGGGLDRNSGNYFNDAKEESDSEDSVTFEFVPNTKKQKCG.

Residues 274–433 form a disordered region; sequence RGDPFDKNYV…VPNTKKQKCG (160 aa). A compositionally biased stretch (low complexity) spans 298–307; it reads SLSSLANAGG. Composition is skewed to gly residues over residues 325–336 and 344–359; these read GLGGLGGGGGGG and GGGGSGTRKMSSGGGG. Over residues 360-376 the composition is skewed to basic and acidic residues; that stretch reads GDHDHGLSSKEKYEQHK. The span at 385 to 398 shows a compositional bias: gly residues; it reads GGSGGGGGGGGGGL.

This sequence belongs to the herpesviridae polymerase accessory protein family. As to quaternary structure, forms homodimers. Interacts with host SMARCB1. Interacts with host NCL/nucleolin; this interaction is important for the organization of proteins within viral replication compartments. Interacts with UL112/UL113; this interaction is necessary for efficient viral DNA replication. Interacts with UL84. Interacts with the uracil DNA glycosylase UL114. Interacts with the DNA polymerase catalytic subunit UL54. Interacts with host IRF3. Interacts with host RELA. In terms of processing, phosphorylated by UL97 on serine residues, phosphorylation seems important for UL44 nuclear entry but does not directly affect its role in replication. Sumoylated. Sumoylation on Lys-410 increases viral DNA replication.

It is found in the virion. It localises to the host nucleus. Its function is as follows. Accessory subunit of the DNA polymerase that plays an essential role in viral DNA replication and acts by increasing the processivity of polymerization. Forms dimers that binds to double-stranded DNA and UL54 specifically to stimulates long chain DNA synthesis efficiently. Plays an important role in maintaining the structure of viral replication compartments by interacting with host nucleolin/NUC. In addition, suppresses innate immune responses through effects on host IRF3 and NF-kappa-B. Mechanistically, interfere with the binding of IRF3 and the p65 NF-kappa-B subunit to the promoters of antiviral genes, thereby inhibiting the expression of these genes. The polypeptide is DNA polymerase processivity factor (UL44) (Human cytomegalovirus (strain Merlin) (HHV-5)).